Reading from the N-terminus, the 308-residue chain is MTQAAPETLPLPPSSTEAIQRFCDALWLEDGLARNTLDAYRRDLTLYAQWLAGRGKALDQTEDVDLSDYFAARHEDSLASTANRRRTVFKRFFQWALREHLVSADPTRLLSTAKQPPRVPKTLSEAQVEALIAAPDVDAPLGLRDRAMIELMYASGLRVSEIVALKTVEVGLNEGVVRVIGGKGGKDRLVPFGAEAGDWLRRYLRDGRTALLGERTADALFVTARGDGMTRQAFWYLIKRYAQRADIHAPLSPHTLRHAFATHLLNHGADLRVVQMLLGHADISTTQIYTHVARERLRTLHAQHHPRG.

The Core-binding (CB) domain maps to 13 to 97 (PSSTEAIQRF…VFKRFFQWAL (85 aa)). A Tyr recombinase domain is found at 118-302 (RVPKTLSEAQ…ARERLRTLHA (185 aa)). Catalysis depends on residues R158, K183, H254, R257, and H280. The active-site O-(3'-phospho-DNA)-tyrosine intermediate is Y289.

It belongs to the 'phage' integrase family. XerD subfamily. Forms a cyclic heterotetrameric complex composed of two molecules of XerC and two molecules of XerD.

It localises to the cytoplasm. Functionally, site-specific tyrosine recombinase, which acts by catalyzing the cutting and rejoining of the recombining DNA molecules. The XerC-XerD complex is essential to convert dimers of the bacterial chromosome into monomers to permit their segregation at cell division. It also contributes to the segregational stability of plasmids. In Ralstonia nicotianae (strain ATCC BAA-1114 / GMI1000) (Ralstonia solanacearum), this protein is Tyrosine recombinase XerD.